The primary structure comprises 1166 residues: ATP-dependent helicase/deoxyribonuclease subunit B (1166 aa).

The UvrD-like helicase ATP-binding domain maps to 1–285 (MGAVFLSGRS…VRLEETKRHR (285 aa)). 8–15 (GRSGSGKT) is an ATP binding site. Residues 279 to 586 (EETKRHRHHP…KFALIPPALD (308 aa)) enclose the UvrD-like helicase C-terminal domain. Positions 801, 1121, 1124, and 1130 each coordinate [4Fe-4S] cluster.

This sequence belongs to the helicase family. AddB/RexB type 1 subfamily. Heterodimer of AddA and AddB. It depends on Mg(2+) as a cofactor. Requires [4Fe-4S] cluster as cofactor.

Its function is as follows. The heterodimer acts as both an ATP-dependent DNA helicase and an ATP-dependent, dual-direction single-stranded exonuclease. Recognizes the chi site generating a DNA molecule suitable for the initiation of homologous recombination. The AddB subunit has 5' -&gt; 3' nuclease activity but not helicase activity. The protein is ATP-dependent helicase/deoxyribonuclease subunit B of Bacillus licheniformis (strain ATCC 14580 / DSM 13 / JCM 2505 / CCUG 7422 / NBRC 12200 / NCIMB 9375 / NCTC 10341 / NRRL NRS-1264 / Gibson 46).